A 157-amino-acid polypeptide reads, in one-letter code: SsrA-binding protein (157 aa).

This sequence belongs to the SmpB family.

Its subcellular location is the cytoplasm. In terms of biological role, required for rescue of stalled ribosomes mediated by trans-translation. Binds to transfer-messenger RNA (tmRNA), required for stable association of tmRNA with ribosomes. tmRNA and SmpB together mimic tRNA shape, replacing the anticodon stem-loop with SmpB. tmRNA is encoded by the ssrA gene; the 2 termini fold to resemble tRNA(Ala) and it encodes a 'tag peptide', a short internal open reading frame. During trans-translation Ala-aminoacylated tmRNA acts like a tRNA, entering the A-site of stalled ribosomes, displacing the stalled mRNA. The ribosome then switches to translate the ORF on the tmRNA; the nascent peptide is terminated with the 'tag peptide' encoded by the tmRNA and targeted for degradation. The ribosome is freed to recommence translation, which seems to be the essential function of trans-translation. This is SsrA-binding protein from Levilactobacillus brevis (strain ATCC 367 / BCRC 12310 / CIP 105137 / JCM 1170 / LMG 11437 / NCIMB 947 / NCTC 947) (Lactobacillus brevis).